We begin with the raw amino-acid sequence, 121 residues long: Small ribosomal subunit protein uS13 (121 aa).

A disordered region spans residues His91–Lys121.

The protein belongs to the universal ribosomal protein uS13 family. Part of the 30S ribosomal subunit. Forms a loose heterodimer with protein S19. Forms two bridges to the 50S subunit in the 70S ribosome.

In terms of biological role, located at the top of the head of the 30S subunit, it contacts several helices of the 16S rRNA. In the 70S ribosome it contacts the 23S rRNA (bridge B1a) and protein L5 of the 50S subunit (bridge B1b), connecting the 2 subunits; these bridges are implicated in subunit movement. Contacts the tRNAs in the A and P-sites. The polypeptide is Small ribosomal subunit protein uS13 (Bordetella avium (strain 197N)).